The primary structure comprises 195 residues: Putative archaetidylserine decarboxylase proenzyme (195 aa).

The active-site Schiff-base intermediate with substrate; via pyruvic acid is S159. A Pyruvic acid (Ser); by autocatalysis modification is found at S159.

This sequence belongs to the phosphatidylserine decarboxylase family. PSD-A subfamily. Heterodimer of a large membrane-associated beta subunit and a small pyruvoyl-containing alpha subunit. Pyruvate serves as cofactor. In terms of processing, is synthesized initially as an inactive proenzyme. Formation of the active enzyme involves a self-maturation process in which the active site pyruvoyl group is generated from an internal serine residue via an autocatalytic post-translational modification. Two non-identical subunits are generated from the proenzyme in this reaction, and the pyruvate is formed at the N-terminus of the alpha chain, which is derived from the carboxyl end of the proenzyme. The autoendoproteolytic cleavage occurs by a canonical serine protease mechanism, in which the side chain hydroxyl group of the serine supplies its oxygen atom to form the C-terminus of the beta chain, while the remainder of the serine residue undergoes an oxidative deamination to produce ammonia and the pyruvoyl prosthetic group on the alpha chain. During this reaction, the Ser that is part of the protease active site of the proenzyme becomes the pyruvoyl prosthetic group, which constitutes an essential element of the active site of the mature decarboxylase. Post-translationally, is synthesized initially as an inactive proenzyme. Formation of the active enzyme involves a self-maturation process in which the active site pyruvoyl group is generated from an internal serine residue via an autocatalytic post-translational modification. Two non-identical subunits are generated from the proenzyme in this reaction, and the pyruvate is formed at the N-terminus of the alpha chain, which is derived from the carboxyl end of the proenzyme. The post-translation cleavage follows an unusual pathway, termed non-hydrolytic serinolysis, in which the side chain hydroxyl group of the serine supplies its oxygen atom to form the C-terminus of the beta chain, while the remainder of the serine residue undergoes an oxidative deamination to produce ammonia and the pyruvoyl prosthetic group on the alpha chain.

The protein localises to the cell membrane. The enzyme catalyses archaetidylserine + H(+) = archaetidylethanolamine + CO2. Its function is as follows. Catalyzes the formation of archaetidylethanolamine (PtdEtn) from archaetidylserine (PtdSer). This is Putative archaetidylserine decarboxylase proenzyme from Archaeoglobus fulgidus (strain ATCC 49558 / DSM 4304 / JCM 9628 / NBRC 100126 / VC-16).